The primary structure comprises 120 residues: Large ribosomal subunit protein uL22 (120 aa).

It belongs to the universal ribosomal protein uL22 family. As to quaternary structure, part of the 50S ribosomal subunit.

Functionally, this protein binds specifically to 23S rRNA; its binding is stimulated by other ribosomal proteins, e.g. L4, L17, and L20. It is important during the early stages of 50S assembly. It makes multiple contacts with different domains of the 23S rRNA in the assembled 50S subunit and ribosome. Its function is as follows. The globular domain of the protein is located near the polypeptide exit tunnel on the outside of the subunit, while an extended beta-hairpin is found that lines the wall of the exit tunnel in the center of the 70S ribosome. This chain is Large ribosomal subunit protein uL22, found in Rippkaea orientalis (strain PCC 8801 / RF-1) (Cyanothece sp. (strain PCC 8801)).